We begin with the raw amino-acid sequence, 420 residues long: Hemocyanin 2-c chain (420 aa).

Basic residues predominate over residues Asp-1 to Val-12. The disordered stretch occupies residues Asp-1 to Gln-20. His-46 lines the Cu cation pocket. Cys-52 and Cys-63 are oxidised to a cystine. Cu cation is bound by residues His-66, His-73, His-185, His-189, and His-216. Disulfide bonds link Cys-175–Cys-242 and Cys-335–Cys-342.

Post-translationally, O-glycosylated. In terms of tissue distribution, hemolymph.

It is found in the secreted. It localises to the extracellular space. Hemocyanins are copper-containing oxygen carriers occurring freely dissolved in the hemolymph of many mollusks and arthropods. This chain is Hemocyanin 2-c chain, found in Megathura crenulata (Giant keyhole limpet).